A 295-amino-acid polypeptide reads, in one-letter code: Bifunctional protein FolD (295 aa).

NADP(+) contacts are provided by residues 166–168 (GRS), S191, and I232.

The protein belongs to the tetrahydrofolate dehydrogenase/cyclohydrolase family. Homodimer.

The enzyme catalyses (6R)-5,10-methylene-5,6,7,8-tetrahydrofolate + NADP(+) = (6R)-5,10-methenyltetrahydrofolate + NADPH. The catalysed reaction is (6R)-5,10-methenyltetrahydrofolate + H2O = (6R)-10-formyltetrahydrofolate + H(+). It participates in one-carbon metabolism; tetrahydrofolate interconversion. Its function is as follows. Catalyzes the oxidation of 5,10-methylenetetrahydrofolate to 5,10-methenyltetrahydrofolate and then the hydrolysis of 5,10-methenyltetrahydrofolate to 10-formyltetrahydrofolate. The chain is Bifunctional protein FolD from Rhodopseudomonas palustris (strain ATCC BAA-98 / CGA009).